Consider the following 237-residue polypeptide: Sugar fermentation stimulation protein homolog (237 aa).

This sequence belongs to the SfsA family.

The polypeptide is Sugar fermentation stimulation protein homolog (Pseudomonas fluorescens (strain ATCC BAA-477 / NRRL B-23932 / Pf-5)).